The following is a 289-amino-acid chain: Cbb3-type cytochrome c oxidase subunit FixP (289 aa).

Topologically, residues 1 to 33 (MADKHKHVDEVSGVETTGHEWDGIRELNNPLPR) are cytoplasmic. Residues 34–56 (WWVYSFYATIIWAIGYAVAYPSW) form a helical membrane-spanning segment. At 57–289 (PMLTEATKGV…VFVHSLGGGE (233 aa)) the chain is on the periplasmic side. Cytochrome c domains lie at 110-198 (FAVS…MSLT) and 205-286 (HLVE…HSLG). Residues Cys123, Cys126, His127, Met175, Cys218, Cys221, His222, and Met263 each contribute to the heme c site.

It belongs to the CcoP / FixP family. As to quaternary structure, component of the cbb3-type cytochrome c oxidase at least composed of FixN, FixO, FixQ and FixP. It depends on heme c as a cofactor.

It localises to the cell inner membrane. The protein operates within energy metabolism; oxidative phosphorylation. Its function is as follows. C-type cytochrome. Part of the cbb3-type cytochrome c oxidase complex. FixP subunit is required for transferring electrons from donor cytochrome c via its heme groups to FixO subunit. From there, electrons are shuttled to the catalytic binuclear center of FixN subunit where oxygen reduction takes place. The complex also functions as a proton pump. The polypeptide is Cbb3-type cytochrome c oxidase subunit FixP (Sinorhizobium medicae (strain WSM419) (Ensifer medicae)).